The chain runs to 286 residues: Phosphatidylserine decarboxylase proenzyme (286 aa).

Active-site charge relay system; for autoendoproteolytic cleavage activity residues include D89, H146, and S252. Residue S252 is the Schiff-base intermediate with substrate; via pyruvic acid; for decarboxylase activity of the active site. The residue at position 252 (S252) is a Pyruvic acid (Ser); by autocatalysis.

This sequence belongs to the phosphatidylserine decarboxylase family. PSD-B subfamily. Prokaryotic type I sub-subfamily. In terms of assembly, heterodimer of a large membrane-associated beta subunit and a small pyruvoyl-containing alpha subunit. Pyruvate is required as a cofactor. Is synthesized initially as an inactive proenzyme. Formation of the active enzyme involves a self-maturation process in which the active site pyruvoyl group is generated from an internal serine residue via an autocatalytic post-translational modification. Two non-identical subunits are generated from the proenzyme in this reaction, and the pyruvate is formed at the N-terminus of the alpha chain, which is derived from the carboxyl end of the proenzyme. The autoendoproteolytic cleavage occurs by a canonical serine protease mechanism, in which the side chain hydroxyl group of the serine supplies its oxygen atom to form the C-terminus of the beta chain, while the remainder of the serine residue undergoes an oxidative deamination to produce ammonia and the pyruvoyl prosthetic group on the alpha chain. During this reaction, the Ser that is part of the protease active site of the proenzyme becomes the pyruvoyl prosthetic group, which constitutes an essential element of the active site of the mature decarboxylase.

Its subcellular location is the cell membrane. It catalyses the reaction a 1,2-diacyl-sn-glycero-3-phospho-L-serine + H(+) = a 1,2-diacyl-sn-glycero-3-phosphoethanolamine + CO2. Its pathway is phospholipid metabolism; phosphatidylethanolamine biosynthesis; phosphatidylethanolamine from CDP-diacylglycerol: step 2/2. In terms of biological role, catalyzes the formation of phosphatidylethanolamine (PtdEtn) from phosphatidylserine (PtdSer). This is Phosphatidylserine decarboxylase proenzyme from Shewanella loihica (strain ATCC BAA-1088 / PV-4).